A 259-amino-acid polypeptide reads, in one-letter code: Energy-coupling factor transporter ATP-binding protein EcfA1 (259 aa).

Residues 3-230 (ITLNSVSFRY…EFDDVEIPFK (228 aa)) form the ABC transporter domain. Position 38-43 (38-43 (GSGKTT)) interacts with ATP. The active-site Proton acceptor is the Glu157.

Belongs to the ABC transporter superfamily. Energy-coupling factor EcfA family. In terms of assembly, forms a heterodimer with EcfA2. Forms a stable energy-coupling factor (ECF) transporter complex composed of 2 membrane-embedded substrate-binding proteins (S component, RibU, BioY), 2 ATP-binding proteins (A component) and 2 transmembrane proteins (T component) upon coexpression in E.coli. Stable subcomplexes with both A plus T components can also be isolated. This complex interacts with at least 2 substrate-specific components, BioY and RibU.

Its subcellular location is the cell inner membrane. Its function is as follows. ATP-binding (A) component of a common energy-coupling factor (ECF) ABC-transporter complex. Unlike classic ABC transporters this ECF transporter provides the energy necessary to transport a number of different substrates. Expression of the complex plus RibU in E.coli allows riboflavin uptake; uptake does not occur in the absence of RibU or the EcfA1A2T complex. The protein is Energy-coupling factor transporter ATP-binding protein EcfA1 of Thermotoga maritima (strain ATCC 43589 / DSM 3109 / JCM 10099 / NBRC 100826 / MSB8).